The chain runs to 283 residues: Phosphatidylglycerol--prolipoprotein diacylglyceryl transferase (283 aa).

4 helical membrane passes run 17–37 (LAVR…TFLG), 56–76 (FLTW…VLFY), 92–112 (WEGG…IWLF), and 117–137 (GIGF…GLAS). Arg139 is a binding site for a 1,2-diacyl-sn-glycero-3-phospho-(1'-sn-glycerol). 3 helical membrane passes run 194 to 214 (PSQL…VWLF), 222 to 242 (GQVA…AEFA), and 255 to 275 (GLSM…VGFV).

The protein belongs to the Lgt family.

The protein localises to the cell inner membrane. The catalysed reaction is L-cysteinyl-[prolipoprotein] + a 1,2-diacyl-sn-glycero-3-phospho-(1'-sn-glycerol) = an S-1,2-diacyl-sn-glyceryl-L-cysteinyl-[prolipoprotein] + sn-glycerol 1-phosphate + H(+). Its pathway is protein modification; lipoprotein biosynthesis (diacylglyceryl transfer). Catalyzes the transfer of the diacylglyceryl group from phosphatidylglycerol to the sulfhydryl group of the N-terminal cysteine of a prolipoprotein, the first step in the formation of mature lipoproteins. The chain is Phosphatidylglycerol--prolipoprotein diacylglyceryl transferase from Neisseria meningitidis serogroup C (strain 053442).